A 58-amino-acid polypeptide reads, in one-letter code: uncharacterized protein (58 aa).

The helical transmembrane segment at 5–27 threads the bilayer; that stretch reads FLHANITIIPHSVLYVSLSYYII.

Its subcellular location is the membrane. This is an uncharacterized protein from Saccharomyces cerevisiae (strain ATCC 204508 / S288c) (Baker's yeast).